A 388-amino-acid chain; its full sequence is Succinate--CoA ligase [ADP-forming] subunit beta (388 aa).

The 236-residue stretch at 9–244 (KQLFQKYGVP…LDEEDPFEIE (236 aa)) folds into the ATP-grasp domain. ATP-binding positions include Lys46, 53 to 55 (GRG), Glu99, Leu102, and Glu107. Mg(2+) contacts are provided by Asn199 and Asp213. Substrate-binding positions include Asn265 and 322–324 (GIL).

It belongs to the succinate/malate CoA ligase beta subunit family. Heterotetramer of two alpha and two beta subunits. Requires Mg(2+) as cofactor.

It carries out the reaction succinate + ATP + CoA = succinyl-CoA + ADP + phosphate. The catalysed reaction is GTP + succinate + CoA = succinyl-CoA + GDP + phosphate. It functions in the pathway carbohydrate metabolism; tricarboxylic acid cycle; succinate from succinyl-CoA (ligase route): step 1/1. Succinyl-CoA synthetase functions in the citric acid cycle (TCA), coupling the hydrolysis of succinyl-CoA to the synthesis of either ATP or GTP and thus represents the only step of substrate-level phosphorylation in the TCA. The beta subunit provides nucleotide specificity of the enzyme and binds the substrate succinate, while the binding sites for coenzyme A and phosphate are found in the alpha subunit. The protein is Succinate--CoA ligase [ADP-forming] subunit beta of Syntrophobacter fumaroxidans (strain DSM 10017 / MPOB).